A 348-amino-acid chain; its full sequence is Eukaryotic translation initiation factor 3 subunit H (348 aa).

An MPN domain is found at 35 to 169 (VQIDGLVVLK…LKAYRLTPKL (135 aa)). The span at 267–285 (QQQKHQYQQRRQQENIQRQ) shows a compositional bias: low complexity. A disordered region spans residues 267-311 (QQQKHQYQQRRQQENIQRQSRGEPPLPEEDINKLFKPPQPPPRME).

Belongs to the eIF-3 subunit H family. Component of the eukaryotic translation initiation factor 3 (eIF-3) complex, which is composed of 13 subunits: EIF3A, EIF3B, EIF3C, EIF3D, EIF3E, EIF3F, EIF3G, EIF3H, EIF3I, EIF3J, EIF3K, EIF3L and EIF3M.

The protein resides in the cytoplasm. Component of the eukaryotic translation initiation factor 3 (eIF-3) complex, which is involved in protein synthesis of a specialized repertoire of mRNAs and, together with other initiation factors, stimulates binding of mRNA and methionyl-tRNAi to the 40S ribosome. The eIF-3 complex specifically targets and initiates translation of a subset of mRNAs involved in cell proliferation. This Taeniopygia guttata (Zebra finch) protein is Eukaryotic translation initiation factor 3 subunit H.